A 483-amino-acid polypeptide reads, in one-letter code: MGNEVRVRYAPSPTGHLHIGNARTALFNYLFARSQGGKFIIRIEDTDKKRNIEGGEQSQLNYLKWLGMDWDESVDIGGEYGPYRQSERNDIYKKYYEELLEKGLAYKCFCTEEELEKEREEQIARGEMPRYSGKHRNLTQEEQERFLAEGRQPSIRFRVPEGKIIAFNDIVKGEISFESDGIGDFVIVKKDGTPTYNFAVAIDDYLMKMTHVLRGEDHISNTPKQIMIFQAFGWDVPVFGHMTLIVNESRKKLSKRDESIIQFIEQYDELGYLPEALFNFIGLLGWSPVGEEELFTREQFIEIFDVNRLSKSPALFDMHKLKWVNNQYVKALDLDQVVELTLPHLQKAGKVGTELSAEEQEWVRKLISLYHEQLSYGAEIVELTDLFFKDEIEYNQEAKAVLEEEQVPEVLSVFAAKLEELEEFTPELIKASIKAVQKETGHKGKKLFMPIRVAVTGQTHGPELPQAIELIGRETAVRRLKSI.

The short motif at Pro11–Asn21 is the 'HIGH' region element. Residues Lys252 to Arg256 carry the 'KMSKS' region motif. Lys255 is an ATP binding site.

This sequence belongs to the class-I aminoacyl-tRNA synthetase family. Glutamate--tRNA ligase type 1 subfamily. Monomer.

The protein resides in the cytoplasm. It catalyses the reaction tRNA(Glu) + L-glutamate + ATP = L-glutamyl-tRNA(Glu) + AMP + diphosphate. In terms of biological role, catalyzes the attachment of glutamate to tRNA(Glu) in a two-step reaction: glutamate is first activated by ATP to form Glu-AMP and then transferred to the acceptor end of tRNA(Glu). This chain is Glutamate--tRNA ligase, found in Bacillus velezensis (strain DSM 23117 / BGSC 10A6 / LMG 26770 / FZB42) (Bacillus amyloliquefaciens subsp. plantarum).